A 1065-amino-acid chain; its full sequence is Pumilio domain-containing protein P35G2.14 (1065 aa).

Disordered regions lie at residues 1-78 (MHQD…SLRS), 130-265 (ITSK…PWSP), and 422-573 (TTGF…NTNS). The span at 16–44 (RNTISKPSNNNPPLDMSSLNNDFGQQLDS) shows a compositional bias: polar residues. The segment covering 59–77 (NPSSNFNDSNRSNISSSLR) has biased composition (low complexity). 2 stretches are compositionally biased toward polar residues: residues 134–151 (LQNN…RGRT) and 169–189 (SSVS…HFNP). Composition is skewed to low complexity over residues 190-224 (SSSS…SEII) and 236-246 (SASNAANSGSN). Polar residues-rich tracts occupy residues 247 to 262 (TIRA…NTLP) and 434 to 455 (GLNT…TFEV). The residue at position 260 (Thr260) is a Phosphothreonine. The span at 470-483 (PLGSLSSRPKPSSS) shows a compositional bias: low complexity. 2 stretches are compositionally biased toward polar residues: residues 495–522 (LKTS…SSSP) and 529–551 (IHNQ…NGLR). Phosphoserine occurs at positions 506, 511, and 515. Phosphothreonine is present on Thr554. The segment covering 559–573 (NISTRSSSESNNTNS) has biased composition (low complexity). The 75-residue stretch at 592 to 666 (HALWVGNLPS…DPVCISFAKV (75 aa)) folds into the RRM domain. One can recognise a PUM-HD domain in the interval 712–1065 (DLSKIYQILN…ELKKLAEVCA (354 aa)). 6 Pumilio repeats span residues 771–808 (AINW…MMLE), 809–844 (RIAP…RLIA), 846–884 (HLQP…AILN), 886–917 (FWVI…VLVA), 919–954 (AITV…ILLT), and 956–993 (RFVQ…LVVD).

Its subcellular location is the cytoplasm. This is Pumilio domain-containing protein P35G2.14 from Schizosaccharomyces pombe (strain 972 / ATCC 24843) (Fission yeast).